The following is a 329-amino-acid chain: Isoaspartyl peptidase/L-asparaginase (329 aa).

The active-site Nucleophile is the Thr-173. Substrate is bound by residues 201 to 204 (RVSD) and 222 to 225 (TGVG).

The protein belongs to the Ntn-hydrolase family. Heterotetramer of two alpha and two beta chains arranged as a dimer of alpha/beta heterodimers. In terms of processing, cleaved into an alpha and beta chain by autocatalysis; this activates the enzyme. The N-terminal residue of the beta subunit is responsible for the nucleophile hydrolase activity.

It catalyses the reaction Cleavage of a beta-linked Asp residue from the N-terminus of a polypeptide.. Degrades proteins damaged by L-isoaspartyl residue formation (also known as beta-Asp residues). Probably performs the final step in the degradation of the reserve polymer cyanophycin (depolymerizes the building block L-beta-Asp-Arg). Also has L-asparaginase activity. The sequence is that of Isoaspartyl peptidase/L-asparaginase from Synechocystis sp. (strain ATCC 27184 / PCC 6803 / Kazusa).